The primary structure comprises 413 residues: Protein FAM8A1 (413 aa).

Residues 1–10 show a composition bias toward basic and acidic residues; it reads MAEGPEEARG. The disordered stretch occupies residues 1-105; that stretch reads MAEGPEEARG…PEAAAPRERP (105 aa). Residues 49–64 are compositionally biased toward low complexity; the sequence is APGRPTAPGLAAAAAA. The span at 65-78 shows a compositional bias: basic and acidic residues; the sequence is DKLEPPRELRKRGE. The interval 107 to 139 is necessary and sufficient to interact with SYVN1; the sequence is RLSAREYSRQVHEWLWQSYCGYLTWHSGLAAFP. The segment at 217–236 is disordered; that stretch reads PVTRVGSAAPSRSPSETGRQ. Phosphoserine is present on Ser229. An RDD domain is found at 242-408; the sequence is VIPSLAHRFM…DIVAGTIVVK (167 aa). 3 helical membrane passes run 257-277, 304-324, and 371-391; these read FFILFFIKATIVLSIMHLSGI, MMVVALIYRLLVCFYEIICIW, and ALIKNFSIASFFPAFITLLFF.

In terms of assembly, component of the HRD1 complex, which comprises at least SYNV1/HRD1, FAM8A1, HERPUD1/HERP, OS9, SEL1L and UBE2J1. This interaction stabilizes FAM8A1 protein, preventing its proteasomal degradation. FAM8A1 binding to SYNV1 may promote recruitment of HERPUD1 to the HRD1 complex. Ubiquitously expressed, with a higher level of expression in testis.

It localises to the membrane. In terms of biological role, plays a role in the assembly of the HRD1 complex, a complex involved in the ubiquitin-proteasome-dependent process of ER-associated degradation (ERAD). This chain is Protein FAM8A1 (FAM8A1), found in Homo sapiens (Human).